Consider the following 374-residue polypeptide: UDP-N-acetylglucosamine--N-acetylmuramyl-(pentapeptide) pyrophosphoryl-undecaprenol N-acetylglucosamine transferase (374 aa).

UDP-N-acetyl-alpha-D-glucosamine is bound by residues 10-12 (TGG), Asn124, Arg166, Ser196, and Gln294.

This sequence belongs to the glycosyltransferase 28 family. MurG subfamily.

The protein localises to the cell membrane. The catalysed reaction is di-trans,octa-cis-undecaprenyl diphospho-N-acetyl-alpha-D-muramoyl-L-alanyl-D-glutamyl-meso-2,6-diaminopimeloyl-D-alanyl-D-alanine + UDP-N-acetyl-alpha-D-glucosamine = di-trans,octa-cis-undecaprenyl diphospho-[N-acetyl-alpha-D-glucosaminyl-(1-&gt;4)]-N-acetyl-alpha-D-muramoyl-L-alanyl-D-glutamyl-meso-2,6-diaminopimeloyl-D-alanyl-D-alanine + UDP + H(+). The protein operates within cell wall biogenesis; peptidoglycan biosynthesis. In terms of biological role, cell wall formation. Catalyzes the transfer of a GlcNAc subunit on undecaprenyl-pyrophosphoryl-MurNAc-pentapeptide (lipid intermediate I) to form undecaprenyl-pyrophosphoryl-MurNAc-(pentapeptide)GlcNAc (lipid intermediate II). In Symbiobacterium thermophilum (strain DSM 24528 / JCM 14929 / IAM 14863 / T), this protein is UDP-N-acetylglucosamine--N-acetylmuramyl-(pentapeptide) pyrophosphoryl-undecaprenol N-acetylglucosamine transferase.